We begin with the raw amino-acid sequence, 119 residues long: Large ribosomal subunit protein uL18 (119 aa).

It belongs to the universal ribosomal protein uL18 family. Part of the 50S ribosomal subunit; part of the 5S rRNA/L5/L18/L25 subcomplex. Contacts the 5S and 23S rRNAs.

Its function is as follows. This is one of the proteins that bind and probably mediate the attachment of the 5S RNA into the large ribosomal subunit, where it forms part of the central protuberance. The chain is Large ribosomal subunit protein uL18 from Cereibacter sphaeroides (strain ATCC 17025 / ATH 2.4.3) (Rhodobacter sphaeroides).